The primary structure comprises 53 residues: Large ribosomal subunit protein eL40 (53 aa).

It belongs to the eukaryotic ribosomal protein eL40 family.

This is Large ribosomal subunit protein eL40 from Pyrobaculum arsenaticum (strain DSM 13514 / JCM 11321 / PZ6).